Consider the following 138-residue polypeptide: Putative thioredoxin-like protein 453L (138 aa).

One can recognise a Thioredoxin domain in the interval 3–138; the sequence is QQKYFEKPVY…FNNIVNYVMG (136 aa). Residues Cys-44 and Cys-47 each act as nucleophile in the active site. A disulfide bridge connects residues Cys-44 and Cys-47.

The protein belongs to the thioredoxin family.

Functionally, participates in various redox reactions through the reversible oxidation of its active center dithiol to a disulfide and catalyzes dithiol-disulfide exchange reactions. The protein is Putative thioredoxin-like protein 453L of Acheta domesticus (House cricket).